The sequence spans 179 residues: MIMHHGRESKRRRRQVIKIPNDDVLEEIIVRLPVKTLTRFQTVSKHWRHTIKSRNGSKPSIRYKTMRLEWSLSRLVGEEEYLTSKKHKERRILFSKSVDGLFCLYSGVDMKQPIMVINPDTRWSKKLPLARIQRKNYLDSNKVEFSRLGFGKDSVTGTYKLAVIPPPPNHGIKHENMSF.

The F-box domain occupies 19 to 55 (IPNDDVLEEIIVRLPVKTLTRFQTVSKHWRHTIKSRN).

The polypeptide is Probable F-box protein At3g25550 (Arabidopsis thaliana (Mouse-ear cress)).